The sequence spans 203 residues: Translation initiation factor IF-3 (203 aa).

Positions 172–182 are enriched in basic and acidic residues; the sequence is EAPKNEKKTKE. Residues 172–203 form a disordered region; the sequence is EAPKNEKKTKENNPPFNRINLMKGENHAKNED.

It belongs to the IF-3 family. As to quaternary structure, monomer.

The protein localises to the cytoplasm. Functionally, IF-3 binds to the 30S ribosomal subunit and shifts the equilibrium between 70S ribosomes and their 50S and 30S subunits in favor of the free subunits, thus enhancing the availability of 30S subunits on which protein synthesis initiation begins. In Helicobacter pylori (strain J99 / ATCC 700824) (Campylobacter pylori J99), this protein is Translation initiation factor IF-3.